Here is a 489-residue protein sequence, read N- to C-terminus: Monocarboxylate transporter 2 (489 aa).

The Cytoplasmic portion of the chain corresponds to 1–21 (MPSESSVKATAAPPPFPLPPD). Residues 22–42 (GGWGWVVVCASFISIGFSYAF) form a helical membrane-spanning segment. The Extracellular segment spans residues 43 to 65 (PKAVTVFFNDIKDIFKTTSSQIA). Residues 66–86 (WISSIMLAVMYAGGPISSVLV) form a helical membrane-spanning segment. Topologically, residues 87 to 95 (NNYGSRPVV) are cytoplasmic. Residues 96-116 (IVGGLLCCTGMILASFSSSVI) traverse the membrane as a helical segment. Over 117–121 (ELYLT) the chain is Extracellular. The chain crosses the membrane as a helical span at residues 122–142 (VGFIGGLGLAFNLQPALTIIG). Over 143-154 (KYFYRKRPLANG) the chain is Cytoplasmic. A helical membrane pass occupies residues 155–175 (FAMAGSPVFLSTLAPFNQFLF). Residues 176–179 (NSYG) are Extracellular-facing. A helical membrane pass occupies residues 180 to 200 (WKGSFLILGAIFLHSCVAGCL). The Cytoplasmic segment spans residues 201-250 (MRPVGPSPRAAKSKSKVGSRQDSSTKRLSKVSTAEKINRFLDFGLFTHRG). Residues 206-227 (PSPRAAKSKSKVGSRQDSSTKR) are disordered. The chain crosses the membrane as a helical span at residues 251-271 (FLIYLSGNVVLFLGMFAPIIF). Residues 272–286 (LAPYAKDKGVDDYNS) lie on the Extracellular side of the membrane. Residues 287 to 307 (AFLLSVMAFTDMFARPSVGLI) traverse the membrane as a helical segment. Topologically, residues 308-316 (ANTSLIRPR) are cytoplasmic. A helical membrane pass occupies residues 317–337 (IQYLFSVAIMFTGICHLLCPL). Topologically, residues 338 to 342 (AHSYT) are extracellular. A helical transmembrane segment spans residues 343–363 (ALVVYVIFFGIGFGSISSLLF). Over 364-377 (ECLMDQVGASRFSS) the chain is Cytoplasmic. The chain crosses the membrane as a helical span at residues 378–398 (AVGLVTIVECCPVLFGPPLAG). At 399–410 (KLLDITGQYKYL) the chain is on the extracellular side. Residues 411 to 431 (YIASGIVVLSSGIYLLICNAI) form a helical membrane-spanning segment. The Cytoplasmic portion of the chain corresponds to 432 to 489 (NYRLLEKERKREKARRKKSASQASKEMEALSRSKQDDVTVKVSNTHNPPSDRDKESSI). Residues 441–489 (KREKARRKKSASQASKEMEALSRSKQDDVTVKVSNTHNPPSDRDKESSI) form a disordered region. 2 stretches are compositionally biased toward basic and acidic residues: residues 456-470 (KEMEALSRSKQDDVT) and 480-489 (PSDRDKESSI).

It belongs to the major facilitator superfamily. Monocarboxylate porter (TC 2.A.1.13) family. Homodimer. Interacts with GRID2IP. Interacts with EMB; interaction mediates SLC16A7 targeting to the plasma membrane. Interacts with isoform 2 of BSG. Detected in brain and kidney (at protein level).

Its subcellular location is the cell membrane. The protein resides in the basolateral cell membrane. The protein localises to the cytoplasm. The enzyme catalyses 3-methyl-2-oxobutanoate(out) + H(+)(out) = 3-methyl-2-oxobutanoate(in) + H(+)(in). It carries out the reaction (S)-lactate(in) + H(+)(in) = (S)-lactate(out) + H(+)(out). The catalysed reaction is acetoacetate(out) + H(+)(out) = acetoacetate(in) + H(+)(in). It catalyses the reaction (R)-3-hydroxybutanoate(out) + H(+)(out) = (R)-3-hydroxybutanoate(in) + H(+)(in). The enzyme catalyses 4-methyl-2-oxopentanoate(out) + H(+)(out) = 4-methyl-2-oxopentanoate(in) + H(+)(in). It carries out the reaction pyruvate(out) + H(+)(out) = pyruvate(in) + H(+)(in). The catalysed reaction is (S)-3-hydroxybutanoate(out) + H(+)(out) = (S)-3-hydroxybutanoate(in) + H(+)(in). Transport activity exhibits steep dependence on substrate concentration. Substrate concentration sensitivity of SLC16A7 arises from the strong inter-subunit cooperativity of the SLC16A7 dimer during transport. Inhibited by AR-C155858. In terms of biological role, proton-coupled monocarboxylate symporter. Catalyzes the rapid transport across the plasma membrane of monocarboxylates such as L-lactate, pyruvate and ketone bodies, acetoacetate, beta-hydroxybutyrate and acetate. Dimerization is functionally required and both subunits work cooperatively in transporting substrate. This chain is Monocarboxylate transporter 2 (Slc16a7), found in Rattus norvegicus (Rat).